The sequence spans 565 residues: MSEQKLALNEYLKTDSDYLRGTIKEGLDSSVTGSFSDGDQQLIKFHGFYQQDDRDLRNERKEQKLEPLYSFMLRARVPGGVCTPKQWLGVDEIASTLTSSNSIRLTTRQTFQYHGIPKRNLKTIIQGLDREALDSIAACGDVNRNVMCNPNPVESKLHAQAYEVAKKLSDHLLPHTRAYAEIWLDEEKLLTTEDETVEPVYGKTYLPRKFKMAVAVPPDNDVDVYTNDLGFIAVAENGELVGFNLTAGGGMGSTHGEVETFPRLADDFGFIKTEDVMKFAEAVMTVQRDWGNRTNRKRSRLKYTIVDHGYEKFKAEVEVRAGVKFEPKRDVVIGDRGDRYGWVEGVDGKWHLTLFIESGRIKDMPGKSLQTGMREIAKIHKGDFRMTSNQNMIIAGVAPEDKATIEGLARKRGLLGQVLTQTRGHSIACVALPTCPLAMAEAERYFPEFIDHIDALQAKNGISDQAIVVRMTGCPNGCARPFAAEIGLVGKAPGRYNLYLGANFEGTRLNKMYRENIQEAEILAELDALFARYAIERNAGETFGNFTVRVGVVKAVIDAAKDFHG.

The [4Fe-4S] cluster site is built by Cys429, Cys435, Cys474, and Cys478. Cys478 is a siroheme binding site.

Belongs to the nitrite and sulfite reductase 4Fe-4S domain family. Alpha(8)-beta(8). The alpha component is a flavoprotein, the beta component is a hemoprotein. It depends on siroheme as a cofactor. [4Fe-4S] cluster is required as a cofactor.

The catalysed reaction is hydrogen sulfide + 3 NADP(+) + 3 H2O = sulfite + 3 NADPH + 4 H(+). Its pathway is sulfur metabolism; hydrogen sulfide biosynthesis; hydrogen sulfide from sulfite (NADPH route): step 1/1. Functionally, component of the sulfite reductase complex that catalyzes the 6-electron reduction of sulfite to sulfide. This is one of several activities required for the biosynthesis of L-cysteine from sulfate. In Shewanella oneidensis (strain ATCC 700550 / JCM 31522 / CIP 106686 / LMG 19005 / NCIMB 14063 / MR-1), this protein is Sulfite reductase [NADPH] hemoprotein beta-component.